The chain runs to 594 residues: MDFLNKKIQKILFICILSFLIVNLTKSEISEVKDVSKFLSVGGGGTGGCQHPIYCNGTLLKTIQLTQVFNDSKTFVDMPMRTSIENVNELFNQLLLNTSKNGGPNKEELAAFLSENFYPAGYEVEPVTPVDWVPNPSFLDEITDPNLVDFARSIHGKWLELTRVFNTSGLCDGCYSSIPVNNPFVIAGSRFREFYYWDSYWIIQGLLVSDMTTTAKGMLRNFGDMITEFGFIPNGGRIYYLNRSQPPLFTQMVNKYFEATNGSDIEFLQEILPILDQEYQWWMTHRTTELTNGETGESVILNLYNVSNNSPRPESYYEDFTDAQSFSSVEEKDYFYSSIASGAESGWDFSSRWMSPSDNTNLTTIQTVDVVPVDLNSILYLNEKILSSFHRTLGNNSMAVYYQAQSESRVDAMQQVFFNEDTYQWNDYNLKTSTNNEAWYTSNILPLFADIQSSIDMDNQEIDLIFKSLANVLIAYPGGVPTSLISAQSLQWDGLNVWPPLQYWIIESIMTPNTTFSNMIGKNLIDRWITTNFCGWNSTLESEGGMMFEKYNANYIGVPGGGGEYVVQNGFGWTNGVDLYLLKKYGKSITLNSC.

The N-terminal stretch at 1–27 is a signal peptide; the sequence is MDFLNKKIQKILFICILSFLIVNLTKS. N-linked (GlcNAc...) asparagine glycosylation is found at asparagine 56, asparagine 70, asparagine 97, and asparagine 166. Substrate is bound by residues arginine 190, 197-198, and asparagine 234; that span reads WD. Asparagine 242 is a glycosylation site (N-linked (GlcNAc...) asparagine). Residue 243–245 participates in substrate binding; that stretch reads RSQ. Residues asparagine 261 and asparagine 305 are each glycosylated (N-linked (GlcNAc...) asparagine). Substrate is bound by residues 312 to 314 and glycine 346; that span reads RPE. Aspartate 348 functions as the Proton donor/acceptor in the catalytic mechanism. N-linked (GlcNAc...) asparagine glycosylation is found at asparagine 361, asparagine 395, asparagine 513, and asparagine 537. Glutamate 549 (proton donor/acceptor) is an active-site residue. Position 564 (glutamate 564) interacts with substrate.

This sequence belongs to the glycosyl hydrolase 37 family.

The catalysed reaction is alpha,alpha-trehalose + H2O = alpha-D-glucose + beta-D-glucose. The chain is Trehalase (treh) from Dictyostelium discoideum (Social amoeba).